The chain runs to 1202 residues: Caskin-2 (1202 aa).

ANK repeat units lie at residues 48-77 (DGFSALHHAALGGSLELIALLLEAQATVDI), 81-110 (NGMRPLHYAAWQGRLEPVRLLLRASAAVNA), 114-143 (DGQIPLHLAAQYGHYEVSEMLLQHQSNPCL), 147-176 (AKKTPLDLACEFGRLKVAQLLLNSHLCVAL), 188-217 (NYTTPLHLAAKNGHREVIRQLLRAGIEINR), and 220-249 (KTGTALHEAALYGKTEVVRLLLEGGVDVNI). Tyr253 carries the post-translational modification Phosphotyrosine. Positions 281-347 (SGILKVRALK…PPGIVEVVSK (67 aa)) constitute an SH3 domain. Positions 355–460 (RLPSAPTPLR…GLHPPSLADN (106 aa)) are disordered. Residues Ser358, Ser393, Ser396, Ser403, Ser406, and Ser409 each carry the phosphoserine modification. Residues 415-425 (SAGSGQSSEGT) show a composition bias toward polar residues. At Ser471 the chain carries Phosphoserine. 2 SAM domains span residues 489-552 (KDAQ…LSIA) and 558-622 (YIPT…LAEL). Disordered stretches follow at residues 676–1104 (LQAA…APKP) and 1116–1181 (GPKL…STKH). The residue at position 725 (Ser725) is a Phosphoserine. The span at 731-740 (NLPEGTERPP) shows a compositional bias: basic and acidic residues. The span at 765 to 774 (SPAPGPPPGA) shows a compositional bias: pro residues. Ser858, Ser877, Ser878, and Ser892 each carry phosphoserine. Pro residues predominate over residues 913–923 (PSEPPGPPAPA). Positions 940 to 949 (PPSRGSSGEG) are enriched in low complexity. 2 stretches are compositionally biased toward pro residues: residues 966 to 978 (PAGPPPRETPVPP) and 1018 to 1030 (PAAPLPSPTPGES). Residues 1031–1051 (PPASSLPQPEPSSLPAQGVPT) are compositionally biased toward low complexity. Composition is skewed to pro residues over residues 1052 to 1068 (PLAPSPAMQPPVPPCPG) and 1124 to 1133 (GPRPVPPPRP). Residues 1135–1151 (STGTVGPGQAQQRLEQT) are compositionally biased toward polar residues. Positions 1161-1172 (AAEKSIGTKEQE) are enriched in basic and acidic residues.

In terms of assembly, may not bind CASK.

It is found in the cytoplasm. This chain is Caskin-2 (CASKIN2), found in Homo sapiens (Human).